The following is a 102-amino-acid chain: Large ribosomal subunit protein uL24 (102 aa).

Belongs to the universal ribosomal protein uL24 family. In terms of assembly, part of the 50S ribosomal subunit.

In terms of biological role, one of two assembly initiator proteins, it binds directly to the 5'-end of the 23S rRNA, where it nucleates assembly of the 50S subunit. Its function is as follows. One of the proteins that surrounds the polypeptide exit tunnel on the outside of the subunit. The chain is Large ribosomal subunit protein uL24 from Burkholderia mallei (strain NCTC 10229).